Here is an 80-residue protein sequence, read N- to C-terminus: Large ribosomal subunit protein bL31B (80 aa).

It belongs to the bacterial ribosomal protein bL31 family. Type B subfamily. Part of the 50S ribosomal subunit.

The polypeptide is Large ribosomal subunit protein bL31B (Exiguobacterium sp. (strain ATCC BAA-1283 / AT1b)).